We begin with the raw amino-acid sequence, 627 residues long: UvrABC system protein C (627 aa).

Positions 22 to 100 (NNPGVYRMFN…IKRLRPRFNV (79 aa)) constitute a GIY-YIG domain. One can recognise a UVR domain in the interval 210-245 (QSVKDHLAAAMQAASADLDFEHAAVYRDRLAALSHV).

Belongs to the UvrC family. Interacts with UvrB in an incision complex.

It is found in the cytoplasm. The UvrABC repair system catalyzes the recognition and processing of DNA lesions. UvrC both incises the 5' and 3' sides of the lesion. The N-terminal half is responsible for the 3' incision and the C-terminal half is responsible for the 5' incision. The chain is UvrABC system protein C from Brucella abortus biovar 1 (strain 9-941).